The following is a 1028-amino-acid chain: Multidrug resistance protein MdtC (1028 aa).

The next 12 membrane-spanning stretches (helical) occupy residues 3 to 23 (FFALFIYRPVATILISIAITL), 333 to 353 (EVEQTLVISVALVILVVFLFL), 360 to 380 (LIPAVAVPVSLIGTFAAMYLC), 387 to 407 (LSLMALTIATGFVVDDAIVVL), 431 to 451 (VGFTVLSMSLSLVAVFLPLLL), 463 to 483 (FAVTLSVAIGISLLVSLTLTP), 528 to 548 (LVGVVLLGTIALNIWLYISIP), 853 to 873 (VILILAAIATVYIVLGILYES), 875 to 895 (VHPLTILSTLPSAGVGALLAL), 897 to 917 (LFNAPFSLIALIGIMLLIGIV), 953 to 973 (PIMMTTLAALFGALPLVISGG), and 984 to 1004 (ITIVGGLVMSQLLTLYTTPVV).

Belongs to the resistance-nodulation-cell division (RND) (TC 2.A.6) family. MdtC subfamily. In terms of assembly, part of a tripartite efflux system composed of MdtA, MdtB and MdtC. MdtC forms a heteromultimer with MdtB.

It is found in the cell inner membrane. The protein is Multidrug resistance protein MdtC of Citrobacter koseri (strain ATCC BAA-895 / CDC 4225-83 / SGSC4696).